Consider the following 151-residue polypeptide: Leukocyte cell-derived chemotaxin-2 (151 aa).

Residues 1–18 (MFSTKALLLAGLISTALA) form the signal peptide. 3 cysteine pairs are disulfide-bonded: Cys25-Cys60, Cys36-Cys41, and Cys99-Cys142. Residues His53, Asp57, and His138 each contribute to the Zn(2+) site.

Belongs to the LECT2/MIM-1 family. Interacts with MET. In terms of tissue distribution, highly expressed in adult and fetal liver and weakly in testis. Not expressed in bone marrow.

It is found in the cytoplasm. The protein resides in the secreted. Its function is as follows. Has a neutrophil chemotactic activity. Also a positive regulator of chondrocyte proliferation. Does not show metalloendopeptidase activity. The protein is Leukocyte cell-derived chemotaxin-2 (LECT2) of Homo sapiens (Human).